The chain runs to 188 residues: Probable manganese efflux pump MntP (188 aa).

A run of 6 helical transmembrane segments spans residues 3–23, 41–61, 66–86, 106–128, 143–163, and 168–188; these read YTAT…ASIG, LIFG…GILA, LEWN…RMII, WLLV…GLAF, ATLI…PMLG, and ILGG…HFHG.

The protein belongs to the MntP (TC 9.B.29) family.

Its subcellular location is the cell inner membrane. Its function is as follows. Probably functions as a manganese efflux pump. The protein is Probable manganese efflux pump MntP of Salmonella heidelberg (strain SL476).